The primary structure comprises 233 residues: Beta-fibrinogenase brevinase (233 aa).

Positions 1-224 (VIGGDECNIN…YIDWIQSIIA (224 aa)) constitute a Peptidase S1 domain. Disulfide bonds link C7–C138, C25–C41, C73–C231, C117–C185, C149–C164, and C175–C200. Residue H40 is the Charge relay system of the active site. An N-linked (GlcNAc...) asparagine glycan is attached at N54. D85 functions as the Charge relay system in the catalytic mechanism. N-linked (GlcNAc...) asparagine glycosylation occurs at N129. Residues 176–178 (RGD) carry the Cell attachment site motif. S179 (charge relay system) is an active-site residue. An N-linked (GlcNAc...) asparagine glycan is attached at N226.

The protein belongs to the peptidase S1 family. Snake venom subfamily. In terms of assembly, heterodimer of the brevinase A chain and the brevinase B chain. In terms of tissue distribution, expressed by the venom gland.

The protein resides in the secreted. The fibrinolytic activity is completely inhibited by PMSF, diisopropylfluorophosphate (DFP), pefabloc, dithiothreitol (DTT) and Zn(2+), but not by Pepstatin A, E64, iodoacetate, chymostatin, tosyl-Lphenylalanine chloromethyl ketone (TPCK), soybean trypsin inhibitor (SBTI), phosphoramidon, Ca(2+), Co(2+), Cu(2+), Fe(2+), Mg(2+), Mn(2+), K(+), and Na(+). Snake venom serine protease that has fibrinogenolytic activities. Preferentially cleaves the Bbeta-chain (FGB) and more slowly the Aa-chain (FGA) of fibrinogen, but does not affect the gamma-chain. Also has fibrinolytic activity. May play a role in antithrombotic reaction as well as thrombolytic reaction. The polypeptide is Beta-fibrinogenase brevinase (Gloydius blomhoffii (Mamushi)).